We begin with the raw amino-acid sequence, 582 residues long: Threonine--tRNA ligase (582 aa).

Residues 185-478 (DHRKLGKELE…LTEQYGGAFP (294 aa)) form a catalytic region. The Zn(2+) site is built by cysteine 278, histidine 329, and histidine 455.

It belongs to the class-II aminoacyl-tRNA synthetase family. Homodimer. Zn(2+) is required as a cofactor.

It is found in the cytoplasm. It carries out the reaction tRNA(Thr) + L-threonine + ATP = L-threonyl-tRNA(Thr) + AMP + diphosphate + H(+). In terms of biological role, catalyzes the attachment of threonine to tRNA(Thr) in a two-step reaction: L-threonine is first activated by ATP to form Thr-AMP and then transferred to the acceptor end of tRNA(Thr). Also edits incorrectly charged L-seryl-tRNA(Thr). This Dehalococcoides mccartyi (strain ATCC BAA-2266 / KCTC 15142 / 195) (Dehalococcoides ethenogenes (strain 195)) protein is Threonine--tRNA ligase.